Here is a 148-residue protein sequence, read N- to C-terminus: Sec-independent protein translocase protein TatB (148 aa).

Residues 1–21 (MFDIGFWELVVIGIVALVVLG) traverse the membrane as a helical segment.

This sequence belongs to the TatB family. As to quaternary structure, the Tat system comprises two distinct complexes: a TatABC complex, containing multiple copies of TatA, TatB and TatC subunits, and a separate TatA complex, containing only TatA subunits. Substrates initially bind to the TatABC complex, which probably triggers association of the separate TatA complex to form the active translocon.

It localises to the cell inner membrane. Functionally, part of the twin-arginine translocation (Tat) system that transports large folded proteins containing a characteristic twin-arginine motif in their signal peptide across membranes. Together with TatC, TatB is part of a receptor directly interacting with Tat signal peptides. TatB may form an oligomeric binding site that transiently accommodates folded Tat precursor proteins before their translocation. This is Sec-independent protein translocase protein TatB from Aeromonas salmonicida (strain A449).